A 397-amino-acid polypeptide reads, in one-letter code: Enoyl-[acyl-carrier-protein] reductase [NADH] (397 aa).

NAD(+)-binding positions include 48–53 (GASTGY), 74–75 (FE), 111–112 (DA), and 139–140 (VA). Y225 provides a ligand contact to substrate. The active-site Proton donor is the Y235. NAD(+) contacts are provided by residues K244 and 273-275 (VVT).

The protein belongs to the TER reductase family. As to quaternary structure, monomer.

It catalyses the reaction a 2,3-saturated acyl-[ACP] + NAD(+) = a (2E)-enoyl-[ACP] + NADH + H(+). It functions in the pathway lipid metabolism; fatty acid biosynthesis. Involved in the final reduction of the elongation cycle of fatty acid synthesis (FAS II). Catalyzes the reduction of a carbon-carbon double bond in an enoyl moiety that is covalently linked to an acyl carrier protein (ACP). The chain is Enoyl-[acyl-carrier-protein] reductase [NADH] from Burkholderia mallei (strain NCTC 10247).